We begin with the raw amino-acid sequence, 125 residues long: Small ribosomal subunit protein uS13 (125 aa).

Residues Arg-92–Lys-125 form a disordered region. The segment covering Arg-107–Lys-125 has biased composition (basic residues).

The protein belongs to the universal ribosomal protein uS13 family. In terms of assembly, part of the 30S ribosomal subunit. Forms a loose heterodimer with protein S19. Forms two bridges to the 50S subunit in the 70S ribosome.

Functionally, located at the top of the head of the 30S subunit, it contacts several helices of the 16S rRNA. In the 70S ribosome it contacts the 23S rRNA (bridge B1a) and protein L5 of the 50S subunit (bridge B1b), connecting the 2 subunits; these bridges are implicated in subunit movement. Contacts the tRNAs in the A and P-sites. The polypeptide is Small ribosomal subunit protein uS13 (Chlorobium phaeobacteroides (strain DSM 266 / SMG 266 / 2430)).